A 727-amino-acid chain; its full sequence is Bromodomain-containing protein C631.02 (727 aa).

Disordered stretches follow at residues 27-231 (AATI…PPMT) and 341-369 (TSYS…AAMY). The span at 56-68 (ENDDGTLDLFGDS) shows a compositional bias: acidic residues. Positions 69–78 (ELEKEQKGDN) are enriched in basic and acidic residues. Residues 102-114 (PSSPTHPSVSNIT) show a composition bias toward polar residues. Residues 128–150 (EEEKSSESLDSHTHPPKRVRNED) are compositionally biased toward basic and acidic residues. The span at 153–177 (LTFSKTSPVSPSSLKDGASNTVTND) shows a compositional bias: polar residues. The residue at position 162 (Ser-162) is a Phosphoserine. A compositionally biased stretch (basic and acidic residues) spans 206–231 (SKEHSSPHDETVKKEENDKDQYPPMT). The 107-residue stretch at 229–335 (PMTKEQHKYI…ATFERQLKQL (107 aa)) folds into the Bromo 1 domain. Residues 388 to 497 (RKDAAEMKFC…SIFQKLWANK (110 aa)) enclose the Bromo 2 domain. Residues 570 to 650 (RSLSVDIYPP…KGDEIGAEAL (81 aa)) enclose the NET domain. The tract at residues 699–727 (IAAYNTKSLGSDDSSSEDDGESSESSDSA) is disordered. The span at 712 to 727 (SSSEDDGESSESSDSA) shows a compositional bias: acidic residues.

This sequence belongs to the BET family.

The protein resides in the nucleus. In Schizosaccharomyces pombe (strain 972 / ATCC 24843) (Fission yeast), this protein is Bromodomain-containing protein C631.02.